A 236-amino-acid chain; its full sequence is Alanyl-tRNA editing protein AlaX-M (236 aa).

Zn(2+)-binding residues include His101, His105, and His205.

This sequence belongs to the class-II aminoacyl-tRNA synthetase family. Editing domain AlaX-M subfamily. Zn(2+) is required as a cofactor.

The protein localises to the cytoplasm. Functions in trans to edit the amino acid moiety from incorrectly charged Ser-tRNA(Ala). This chain is Alanyl-tRNA editing protein AlaX-M (alaXM), found in Saccharolobus solfataricus (strain ATCC 35092 / DSM 1617 / JCM 11322 / P2) (Sulfolobus solfataricus).